We begin with the raw amino-acid sequence, 274 residues long: 2-dehydro-3-deoxyphosphooctonate aldolase (274 aa).

It belongs to the KdsA family.

Its subcellular location is the cytoplasm. It carries out the reaction D-arabinose 5-phosphate + phosphoenolpyruvate + H2O = 3-deoxy-alpha-D-manno-2-octulosonate-8-phosphate + phosphate. Its pathway is carbohydrate biosynthesis; 3-deoxy-D-manno-octulosonate biosynthesis; 3-deoxy-D-manno-octulosonate from D-ribulose 5-phosphate: step 2/3. It functions in the pathway bacterial outer membrane biogenesis; lipopolysaccharide biosynthesis. This is 2-dehydro-3-deoxyphosphooctonate aldolase from Rickettsia typhi (strain ATCC VR-144 / Wilmington).